The sequence spans 579 residues: Ribonucleoside-diphosphate reductase small chain (579 aa).

Fe cation-binding residues include D130, E160, and H163. Y167 is an active-site residue. E225, E258, and H261 together coordinate Fe cation. The Fido domain maps to 435–579 (DMTWTLKDVH…VSVFVDQFYR (145 aa)).

It belongs to the ribonucleoside diphosphate reductase small chain family. Heterotetramer composed of a homodimer of the large subunit (R1) and a homodimer of the small subunit (R2). Larger multisubunit protein complex are also active, composed of (R1)n(R2)n. Requires Fe cation as cofactor.

The catalysed reaction is a 2'-deoxyribonucleoside 5'-diphosphate + [thioredoxin]-disulfide + H2O = a ribonucleoside 5'-diphosphate + [thioredoxin]-dithiol. Its function is as follows. Ribonucleoside-diphosphate reductase holoenzyme provides the precursors necessary for viral DNA synthesis. Allows virus growth in non-dividing cells. Catalyzes the biosynthesis of deoxyribonucleotides from the corresponding ribonucleotides. The protein is Ribonucleoside-diphosphate reductase small chain of Magallana gigas (Pacific oyster).